Consider the following 157-residue polypeptide: Transcriptional repressor NrdR (157 aa).

Residues methionine 1–aspartate 21 are disordered. The segment at cysteine 3–cysteine 34 is a zinc-finger region. The segment covering serine 11 to aspartate 21 has biased composition (basic and acidic residues). An ATP-cone domain is found at leucine 49–aspartate 139.

The protein belongs to the NrdR family. Requires Zn(2+) as cofactor.

Its function is as follows. Negatively regulates transcription of bacterial ribonucleotide reductase nrd genes and operons by binding to NrdR-boxes. This is Transcriptional repressor NrdR from Sinorhizobium fredii (strain NBRC 101917 / NGR234).